A 574-amino-acid chain; its full sequence is Glycine--tRNA ligase (574 aa).

The substrate site is built by Arg96 and Glu162. ATP contacts are provided by residues 194–196 (RNE), 204–209 (IRLREF), 327–328 (EC), and 450–453 (GIDR). A substrate-binding site is contributed by 209-213 (FTQAE). 446 to 450 (EPSYG) lines the substrate pocket.

Belongs to the class-II aminoacyl-tRNA synthetase family.

The protein localises to the cytoplasm. It catalyses the reaction tRNA(Gly) + glycine + ATP = glycyl-tRNA(Gly) + AMP + diphosphate. Functionally, catalyzes the attachment of glycine to tRNA(Gly). The chain is Glycine--tRNA ligase from Methanococcus vannielii (strain ATCC 35089 / DSM 1224 / JCM 13029 / OCM 148 / SB).